Reading from the N-terminus, the 439-residue chain is Secreted aspartic protease LUC8 (439 aa).

The N-terminal stretch at 1–20 (MMHAFHHLAVLLIGSLPASA) is a signal peptide. N-linked (GlcNAc...) asparagine glycans are attached at residues Asn-33 and Asn-54. In terms of domain architecture, Peptidase A1 spans 51 to 435 (YLFNITVGTP…DFETQSFGLA (385 aa)). Asp-69 is a catalytic residue. N-linked (GlcNAc...) asparagine glycans are attached at residues Asn-110, Asn-126, Asn-179, and Asn-289. Asp-300 is a catalytic residue. N-linked (GlcNAc...) asparagine glycans are attached at residues Asn-329 and Asn-373. Cysteines 355 and 391 form a disulfide.

This sequence belongs to the peptidase A1 family.

Its subcellular location is the secreted. Functionally, secreted aspartic protease; part of the gene cluster that mediates the biosynthesis of the mycotoxin lucilactaene and the lucilactaene-related compound NG-391 that act as cell cycle inhibitors with potent growth inhibitory activity against malarial parasites, moderate growth inhibitory activity against cancer cells, and no activity against bacteria and fungi. Within the cluster, LUC7 and LUC8 encode proteins which are not commonly involved in the biosynthesis of secondary metabolites and are not essential for lucilactaene biosynthesis. In Fusarium sp, this protein is Secreted aspartic protease LUC8.